Consider the following 543-residue polypeptide: CTP synthase (543 aa).

The segment at 1 to 265 (MARYIFITGG…DDEVLAAFGI (265 aa)) is amidoligase domain. Ser13 contributes to the CTP binding site. UTP is bound at residue Ser13. 14–19 (SLGKGL) lines the ATP pocket. Tyr54 provides a ligand contact to L-glutamine. An ATP-binding site is contributed by Asp71. Residues Asp71 and Glu139 each contribute to the Mg(2+) site. CTP-binding positions include 146 to 148 (DIE), 186 to 191 (KTKPTQ), and Lys222. UTP contacts are provided by residues 186–191 (KTKPTQ) and Lys222. 238-240 (RDV) is a binding site for ATP. One can recognise a Glutamine amidotransferase type-1 domain in the interval 291-542 (TIAIVGKYTG…VQAAVVQSRL (252 aa)). Gly353 contacts L-glutamine. Cys380 (nucleophile; for glutamine hydrolysis) is an active-site residue. Residues 381–384 (FGMQ), Glu404, and Arg470 contribute to the L-glutamine site. Active-site residues include His515 and Glu517.

The protein belongs to the CTP synthase family. Homotetramer.

It carries out the reaction UTP + L-glutamine + ATP + H2O = CTP + L-glutamate + ADP + phosphate + 2 H(+). The enzyme catalyses L-glutamine + H2O = L-glutamate + NH4(+). It catalyses the reaction UTP + NH4(+) + ATP = CTP + ADP + phosphate + 2 H(+). It functions in the pathway pyrimidine metabolism; CTP biosynthesis via de novo pathway; CTP from UDP: step 2/2. Allosterically activated by GTP, when glutamine is the substrate; GTP has no effect on the reaction when ammonia is the substrate. The allosteric effector GTP functions by stabilizing the protein conformation that binds the tetrahedral intermediate(s) formed during glutamine hydrolysis. Inhibited by the product CTP, via allosteric rather than competitive inhibition. Catalyzes the ATP-dependent amination of UTP to CTP with either L-glutamine or ammonia as the source of nitrogen. Regulates intracellular CTP levels through interactions with the four ribonucleotide triphosphates. This Rhodopseudomonas palustris (strain BisB18) protein is CTP synthase.